A 419-amino-acid polypeptide reads, in one-letter code: Dual specificity protein phosphatase 7 (419 aa).

Residues 1 to 47 (MKNQLRGPPARAHMSTSGAAAAGGTRAGSEPGAGSGSGAGTGAGAAT) are disordered. Over residues 10-29 (ARAHMSTSGAAAAGGTRAGS) the composition is skewed to low complexity. Residues 31–47 (PGAGSGSGAGTGAGAAT) are compositionally biased toward gly residues. The 120-residue stretch at 68–187 (GGASLLLLDC…FQTEYSEHCE (120 aa)) folds into the Rhodanese domain. Residues 216-240 (CSDGESDRELPSSATESDGSPVPSS) are disordered. Residues 227 to 240 (SSATESDGSPVPSS) are compositionally biased toward polar residues. The Tyrosine-protein phosphatase domain occupies 244–387 (FPVQILPYLY…LLDFERTLGL (144 aa)). Cys-331 serves as the catalytic Phosphocysteine intermediate. 331–337 (CLAGISR) lines the substrate pocket.

The protein belongs to the protein-tyrosine phosphatase family. Non-receptor class dual specificity subfamily. As to quaternary structure, interacts with MAPK1/ERK2; the interaction enhances DUSP7 phosphatase activity. In terms of tissue distribution, strongly expressed in liver. Expressed at significantly higher levels in malignant hematopoietic cells than in corresponding non-malignant cells.

The protein resides in the cytoplasm. The catalysed reaction is O-phospho-L-tyrosyl-[protein] + H2O = L-tyrosyl-[protein] + phosphate. It catalyses the reaction O-phospho-L-seryl-[protein] + H2O = L-seryl-[protein] + phosphate. The enzyme catalyses O-phospho-L-threonyl-[protein] + H2O = L-threonyl-[protein] + phosphate. Its activity is regulated as follows. Strongly inhibited by sodium orthovanadate. In terms of biological role, dual specificity protein phosphatase. Shows high activity towards MAPK1/ERK2. Also has lower activity towards MAPK14 and MAPK8. In arrested oocytes, plays a role in meiotic resumption. Promotes nuclear envelope breakdown and activation of the CDK1/Cyclin-B complex in oocytes, probably by dephosphorylating and inactivating the conventional protein kinase C (cPKC) isozyme PRKCB. May also inactivate PRKCA and/or PRKCG. Also important in oocytes for normal chromosome alignment on the metaphase plate and progression to anaphase, where it might regulate activity of the spindle-assembly checkpoint (SAC) complex. The sequence is that of Dual specificity protein phosphatase 7 from Homo sapiens (Human).